The following is a 254-amino-acid chain: Major prion protein (254 aa).

An N-terminal signal peptide occupies residues 1–28; the sequence is MANLGYWLLALFVTTCTDVGLCKKRPKP. An interaction with ADGRG6 region spans residues 23–38; the sequence is KKRPKPGGWNTGGSRY. The segment at 23–231 is interaction with GRB2, ERI3 and SYN1; sequence KKRPKPGGWN…SQAYYDGRRS (209 aa). Residues 24–107 are disordered; the sequence is KRPKPGGWNT…QWNKPSKPKT (84 aa). 5 repeat units span residues 51-59, 60-67, 68-75, 76-83, and 84-91. Residues 51-91 form a 5 X 8 AA tandem repeats of P-H-G-G-G-W-G-Q region; the sequence is PQSGGTWGQPHGGGWGQPHGGGWGQPHGGGWGQPHGGGWSQ. Over residues 55 to 95 the composition is skewed to gly residues; that stretch reads GTWGQPHGGGWGQPHGGGWGQPHGGGWGQPHGGGWSQGGGT. 12 residues coordinate Cu(2+): H61, G62, G63, H69, G70, G71, H77, G78, G79, H85, G86, and G87. An intrachain disulfide couples C179 to C214. N181 and N197 each carry an N-linked (GlcNAc...) asparagine glycan. A lipid anchor (GPI-anchor amidated serine) is attached at S231. Positions 232–254 are cleaved as a propeptide — removed in mature form; sequence SAVLFSSPPVILLISFLIFLIVG.

Belongs to the prion family. As to quaternary structure, monomer and homodimer. Has a tendency to aggregate into amyloid fibrils containing a cross-beta spine, formed by a steric zipper of superposed beta-strands. Soluble oligomers may represent an intermediate stage on the path to fibril formation. Copper binding may promote oligomerization. Interacts with GRB2, APP, ERI3/PRNPIP and SYN1. Mislocalized cytosolically exposed PrP interacts with MGRN1; this interaction alters MGRN1 subcellular location and causes lysosomal enlargement. Interacts with APP. Interacts with KIAA1191. Interacts with ADGRG6.

Its subcellular location is the cell membrane. The protein localises to the golgi apparatus. Functionally, its primary physiological function is unclear. May play a role in neuronal development and synaptic plasticity. May be required for neuronal myelin sheath maintenance. May promote myelin homeostasis through acting as an agonist for ADGRG6 receptor. May play a role in iron uptake and iron homeostasis. Soluble oligomers are toxic to cultured neuroblastoma cells and induce apoptosis (in vitro). Association with GPC1 (via its heparan sulfate chains) targets PRNP to lipid rafts. Also provides Cu(2+) or Zn(2+) for the ascorbate-mediated GPC1 deaminase degradation of its heparan sulfate side chains. The chain is Major prion protein (Prnp) from Rattus norvegicus (Rat).